The primary structure comprises 287 residues: Bifunctional protein FolD (287 aa).

NADP(+) contacts are provided by residues 165–167 (GRS), Ser-190, and Ile-231.

This sequence belongs to the tetrahydrofolate dehydrogenase/cyclohydrolase family. Homodimer.

It carries out the reaction (6R)-5,10-methylene-5,6,7,8-tetrahydrofolate + NADP(+) = (6R)-5,10-methenyltetrahydrofolate + NADPH. The enzyme catalyses (6R)-5,10-methenyltetrahydrofolate + H2O = (6R)-10-formyltetrahydrofolate + H(+). Its pathway is one-carbon metabolism; tetrahydrofolate interconversion. In terms of biological role, catalyzes the oxidation of 5,10-methylenetetrahydrofolate to 5,10-methenyltetrahydrofolate and then the hydrolysis of 5,10-methenyltetrahydrofolate to 10-formyltetrahydrofolate. The protein is Bifunctional protein FolD of Trichodesmium erythraeum (strain IMS101).